The following is a 663-amino-acid chain: COBRA-like protein 9 (663 aa).

The signal sequence occupies residues 1–23 (MGVLLPIFFGVLLLFTVTPPSMS). N-linked (GlcNAc...) asparagine glycosylation is found at asparagine 63, asparagine 111, asparagine 121, asparagine 169, asparagine 203, asparagine 326, asparagine 355, asparagine 397, asparagine 409, asparagine 429, asparagine 470, asparagine 550, and asparagine 561. The GPI-anchor amidated serine moiety is linked to residue serine 638. The propeptide at 639–663 (GGRRNGAITVLSFITFYVAAFMVLL) is removed in mature form.

This sequence belongs to the COBRA family. In terms of tissue distribution, expressed only in flowers.

Its subcellular location is the cell membrane. The protein is COBRA-like protein 9 (COBL9) of Arabidopsis thaliana (Mouse-ear cress).